Here is a 257-residue protein sequence, read N- to C-terminus: Methylthioribulose-1-phosphate dehydratase (257 aa).

Residues 1 to 33 form a disordered region; sequence MVSSQEKMASISDIIQKDEDSGSEKTESQDKEH. A compositionally biased stretch (basic and acidic residues) spans 15 to 33; sequence IQKDEDSGSEKTESQDKEH. Cysteine 107 is a substrate binding site. Histidine 125 and histidine 127 together coordinate Zn(2+). Catalysis depends on glutamate 149, which acts as the Proton donor/acceptor. Position 205 (histidine 205) interacts with Zn(2+).

It belongs to the aldolase class II family. MtnB subfamily. Zn(2+) is required as a cofactor.

It is found in the cytoplasm. It carries out the reaction 5-(methylsulfanyl)-D-ribulose 1-phosphate = 5-methylsulfanyl-2,3-dioxopentyl phosphate + H2O. The protein operates within amino-acid biosynthesis; L-methionine biosynthesis via salvage pathway; L-methionine from S-methyl-5-thio-alpha-D-ribose 1-phosphate: step 2/6. Functionally, catalyzes the dehydration of methylthioribulose-1-phosphate (MTRu-1-P) into 2,3-diketo-5-methylthiopentyl-1-phosphate (DK-MTP-1-P). Functions in the methionine salvage pathway. May play a role in apoptosis. The chain is Methylthioribulose-1-phosphate dehydratase from Esox lucius (Northern pike).